The following is a 576-amino-acid chain: TRAF-type zinc finger domain-containing protein 1 (576 aa).

The residue at position 2 (Ala2) is an N-acetylalanine. Residues 27–103 (IHEIHCQRNI…DLELSVVKLK (77 aa)) form a TRAF-type zinc finger. A phosphoserine mark is found at Ser278, Ser320, Ser326, Ser327, Ser409, Ser415, Ser430, and Ser450. A disordered region spans residues 402–432 (EGIPTQDSQPEDRSPELSRRRVKHQGDLSSG). The span at 411 to 420 (PEDRSPELSR) shows a compositional bias: basic and acidic residues. Disordered stretches follow at residues 465–491 (LNSSGPRSDCQRSPPGVLKLNNSGSQD) and 529–576 (HGSP…EEEE). Ser531 is subject to Phosphoserine. Over residues 540-552 (GSRSSRVTPTAAS) the composition is skewed to polar residues.

Interacts with MAVS, TICAM1, TRAF1, TRAF2, TRAF3 and TRAF6. Expressed in vascular smooth muscle cells.

Functionally, negative feedback regulator that controls excessive innate immune responses. Regulates both Toll-like receptor 4 (TLR4) and DDX58/RIG1-like helicases (RLH) pathways. May inhibit the LTR pathway by direct interaction with TRAF6 and attenuation of NF-kappa-B activation. May negatively regulate the RLH pathway downstream from MAVS and upstream of NF-kappa-B and IRF3. This Rattus norvegicus (Rat) protein is TRAF-type zinc finger domain-containing protein 1 (Trafd1).